Reading from the N-terminus, the 331-residue chain is Glycerol-3-phosphate dehydrogenase [NAD(P)+] (331 aa).

Serine 11, phenylalanine 12, arginine 32, and lysine 106 together coordinate NADPH. Lysine 106, glycine 134, and serine 136 together coordinate sn-glycerol 3-phosphate. Alanine 138 contributes to the NADPH binding site. Residues lysine 189, aspartate 242, serine 252, arginine 253, and asparagine 254 each coordinate sn-glycerol 3-phosphate. Residue lysine 189 is the Proton acceptor of the active site. An NADPH-binding site is contributed by arginine 253. NADPH-binding residues include valine 277 and glutamate 279.

This sequence belongs to the NAD-dependent glycerol-3-phosphate dehydrogenase family.

The protein resides in the cytoplasm. The enzyme catalyses sn-glycerol 3-phosphate + NAD(+) = dihydroxyacetone phosphate + NADH + H(+). It carries out the reaction sn-glycerol 3-phosphate + NADP(+) = dihydroxyacetone phosphate + NADPH + H(+). It functions in the pathway membrane lipid metabolism; glycerophospholipid metabolism. Its function is as follows. Catalyzes the reduction of the glycolytic intermediate dihydroxyacetone phosphate (DHAP) to sn-glycerol 3-phosphate (G3P), the key precursor for phospholipid synthesis. The sequence is that of Glycerol-3-phosphate dehydrogenase [NAD(P)+] from Clostridium perfringens (strain SM101 / Type A).